Reading from the N-terminus, the 338-residue chain is Lipoate-protein ligase A (338 aa).

The BPL/LPL catalytic domain occupies Pro29–Val216. Residues Arg71, Gly76 to Phe79, and Lys134 contribute to the ATP site. Lys134 lines the (R)-lipoate pocket.

Belongs to the LplA family. In terms of assembly, monomer.

It is found in the cytoplasm. The enzyme catalyses L-lysyl-[lipoyl-carrier protein] + (R)-lipoate + ATP = N(6)-[(R)-lipoyl]-L-lysyl-[lipoyl-carrier protein] + AMP + diphosphate + H(+). The protein operates within protein modification; protein lipoylation via exogenous pathway; protein N(6)-(lipoyl)lysine from lipoate: step 1/2. It participates in protein modification; protein lipoylation via exogenous pathway; protein N(6)-(lipoyl)lysine from lipoate: step 2/2. Functionally, catalyzes both the ATP-dependent activation of exogenously supplied lipoate to lipoyl-AMP and the transfer of the activated lipoyl onto the lipoyl domains of lipoate-dependent enzymes. The chain is Lipoate-protein ligase A from Shigella sonnei (strain Ss046).